A 230-amino-acid polypeptide reads, in one-letter code: Heptaprenylglyceryl phosphate synthase (230 aa).

Residue Lys12 coordinates sn-glycerol 1-phosphate. Asp14 and Thr40 together coordinate Mg(2+). Sn-glycerol 1-phosphate is bound by residues 159-164 (YIEYSG), Gly189, and 209-210 (GD).

The protein belongs to the GGGP/HepGP synthase family. Group I subfamily. Homodimer. Mg(2+) serves as cofactor.

It carries out the reaction sn-glycerol 1-phosphate + all-trans-heptaprenyl diphosphate = 3-heptaprenyl-sn-glycero-1-phosphate + diphosphate. It participates in membrane lipid metabolism; glycerophospholipid metabolism. Functionally, prenyltransferase that catalyzes in vivo the transfer of the heptaprenyl moiety of heptaprenyl pyrophosphate (HepPP; 35 carbon atoms) to the C3 hydroxyl of sn-glycerol-1-phosphate (G1P), producing heptaprenylglyceryl phosphate (HepGP). This reaction is an ether-bond-formation step in the biosynthesis of archaea-type G1P-based membrane lipids found in Bacillales. To a much lesser extent, is also able to use geranylgeranyl diphosphate (GGPP; C20) as the prenyl donor. The protein is Heptaprenylglyceryl phosphate synthase of Staphylococcus aureus (strain NCTC 8325 / PS 47).